The primary structure comprises 198 residues: Molybdenum cofactor guanylyltransferase (198 aa).

GTP contacts are provided by residues 14-16 (LAG), K27, D73, and D103. D103 contacts Mg(2+).

The protein belongs to the MobA family. Monomer. Requires Mg(2+) as cofactor.

Its subcellular location is the cytoplasm. It carries out the reaction Mo-molybdopterin + GTP + H(+) = Mo-molybdopterin guanine dinucleotide + diphosphate. Functionally, transfers a GMP moiety from GTP to Mo-molybdopterin (Mo-MPT) cofactor (Moco or molybdenum cofactor) to form Mo-molybdopterin guanine dinucleotide (Mo-MGD) cofactor. The sequence is that of Molybdenum cofactor guanylyltransferase from Pseudomonas aeruginosa (strain ATCC 15692 / DSM 22644 / CIP 104116 / JCM 14847 / LMG 12228 / 1C / PRS 101 / PAO1).